A 276-amino-acid polypeptide reads, in one-letter code: MKVKLADKHGFCFGVKRAIKLAESHQGGITLGPLIHNKKEIERLKNDFGVTVEESVENLPRGSEVIIRTHGIPKDDLAKLTQSAEKIIDATCPFVTKPQKICEIMSQEGYQIIIFGDINHPEVQGVMSYSSSEPIVVMSPKELFGAKLKEKVALVSQTTKKIEDFLGVASFLVQRCAEVRIFNTICNATFDNQEAARHLSQEVDIMIIAGGKNSSNTKQLLSICLEHCQDSYLIEDESELDPQWFTNKKTCGVTAGASTPEWIIERVVRTIEGYKG.

Cysteine 12 provides a ligand contact to [4Fe-4S] cluster. (2E)-4-hydroxy-3-methylbut-2-enyl diphosphate is bound by residues histidine 36 and histidine 70. Dimethylallyl diphosphate contacts are provided by histidine 36 and histidine 70. 2 residues coordinate isopentenyl diphosphate: histidine 36 and histidine 70. Cysteine 92 contributes to the [4Fe-4S] cluster binding site. A (2E)-4-hydroxy-3-methylbut-2-enyl diphosphate-binding site is contributed by histidine 120. Histidine 120 is a dimethylallyl diphosphate binding site. Residue histidine 120 participates in isopentenyl diphosphate binding. The Proton donor role is filled by glutamate 122. Residue threonine 158 participates in (2E)-4-hydroxy-3-methylbut-2-enyl diphosphate binding. Residue cysteine 186 participates in [4Fe-4S] cluster binding. Residues serine 214, serine 215, asparagine 216, and serine 258 each contribute to the (2E)-4-hydroxy-3-methylbut-2-enyl diphosphate site. Dimethylallyl diphosphate-binding residues include serine 214, serine 215, asparagine 216, and serine 258. Isopentenyl diphosphate is bound by residues serine 214, serine 215, asparagine 216, and serine 258.

This sequence belongs to the IspH family. [4Fe-4S] cluster serves as cofactor.

It catalyses the reaction isopentenyl diphosphate + 2 oxidized [2Fe-2S]-[ferredoxin] + H2O = (2E)-4-hydroxy-3-methylbut-2-enyl diphosphate + 2 reduced [2Fe-2S]-[ferredoxin] + 2 H(+). It carries out the reaction dimethylallyl diphosphate + 2 oxidized [2Fe-2S]-[ferredoxin] + H2O = (2E)-4-hydroxy-3-methylbut-2-enyl diphosphate + 2 reduced [2Fe-2S]-[ferredoxin] + 2 H(+). The protein operates within isoprenoid biosynthesis; dimethylallyl diphosphate biosynthesis; dimethylallyl diphosphate from (2E)-4-hydroxy-3-methylbutenyl diphosphate: step 1/1. Its pathway is isoprenoid biosynthesis; isopentenyl diphosphate biosynthesis via DXP pathway; isopentenyl diphosphate from 1-deoxy-D-xylulose 5-phosphate: step 6/6. In terms of biological role, catalyzes the conversion of 1-hydroxy-2-methyl-2-(E)-butenyl 4-diphosphate (HMBPP) into a mixture of isopentenyl diphosphate (IPP) and dimethylallyl diphosphate (DMAPP). Acts in the terminal step of the DOXP/MEP pathway for isoprenoid precursor biosynthesis. In Wolinella succinogenes (strain ATCC 29543 / DSM 1740 / CCUG 13145 / JCM 31913 / LMG 7466 / NCTC 11488 / FDC 602W) (Vibrio succinogenes), this protein is 4-hydroxy-3-methylbut-2-enyl diphosphate reductase.